A 416-amino-acid chain; its full sequence is UPF0761 membrane protein Mpe_A1422 (416 aa).

6 helical membrane passes run 63–83 (IALVPLATVTLAIFSAFPMFG), 120–140 (LGTVGLVVLVLTALALMLTID), 159–179 (VLVYWAAATLGPLLLGVSLTL), 198–218 (LSVLLNALEFGLLAAAMAGLF), 234–256 (GGLFVSAGFELAKKGLAWYLAQV), and 271–291 (IFLIWLYLGWVIVLLGAVIAA).

Belongs to the UPF0761 family.

Its subcellular location is the cell inner membrane. This Methylibium petroleiphilum (strain ATCC BAA-1232 / LMG 22953 / PM1) protein is UPF0761 membrane protein Mpe_A1422.